The sequence spans 231 residues: Deoxyribose-phosphate aldolase (231 aa).

D86 (proton donor/acceptor) is an active-site residue. The Schiff-base intermediate with acetaldehyde role is filled by K147. K172 (proton donor/acceptor) is an active-site residue. Positions 206 to 231 (WQAETAGETVTEPESDRDGADTTDGY) are disordered.

Belongs to the DeoC/FbaB aldolase family. DeoC type 1 subfamily.

It is found in the cytoplasm. The catalysed reaction is 2-deoxy-D-ribose 5-phosphate = D-glyceraldehyde 3-phosphate + acetaldehyde. The protein operates within carbohydrate degradation; 2-deoxy-D-ribose 1-phosphate degradation; D-glyceraldehyde 3-phosphate and acetaldehyde from 2-deoxy-alpha-D-ribose 1-phosphate: step 2/2. Functionally, catalyzes a reversible aldol reaction between acetaldehyde and D-glyceraldehyde 3-phosphate to generate 2-deoxy-D-ribose 5-phosphate. The polypeptide is Deoxyribose-phosphate aldolase (Haloarcula marismortui (strain ATCC 43049 / DSM 3752 / JCM 8966 / VKM B-1809) (Halobacterium marismortui)).